The sequence spans 237 residues: Orotidine 5'-phosphate decarboxylase (237 aa).

Residues Asp17, Lys39, Asp66–Thr75, Thr121, Arg182, Gln191, Gly211, and Arg212 contribute to the substrate site. Lys68 (proton donor) is an active-site residue.

Belongs to the OMP decarboxylase family. Type 1 subfamily. In terms of assembly, homodimer.

The catalysed reaction is orotidine 5'-phosphate + H(+) = UMP + CO2. It functions in the pathway pyrimidine metabolism; UMP biosynthesis via de novo pathway; UMP from orotate: step 2/2. Functionally, catalyzes the decarboxylation of orotidine 5'-monophosphate (OMP) to uridine 5'-monophosphate (UMP). The polypeptide is Orotidine 5'-phosphate decarboxylase (Rhodopseudomonas palustris (strain ATCC BAA-98 / CGA009)).